Here is a 322-residue protein sequence, read N- to C-terminus: uncharacterized protein (322 aa).

Composition is skewed to basic residues over residues 1-16 (MPGN…KSGT) and 43-61 (LRPH…RRPV). Residues 1–69 (MPGNSRRRGA…PVKRADETET (69 aa)) are disordered. Gly261, Ile281, and Leu290 together coordinate S-adenosyl-L-methionine.

Belongs to the class IV-like SAM-binding methyltransferase superfamily. RNA methyltransferase TrmH family.

This is an uncharacterized protein from Mycobacterium bovis (strain ATCC BAA-935 / AF2122/97).